Consider the following 90-residue polypeptide: DNA-directed RNA polymerase subunit Rpo11 (90 aa).

It belongs to the archaeal Rpo11/eukaryotic RPB11/RPC19 RNA polymerase subunit family. As to quaternary structure, part of the 13-subunit RNA polymerase complex.

It is found in the cytoplasm. It catalyses the reaction RNA(n) + a ribonucleoside 5'-triphosphate = RNA(n+1) + diphosphate. In terms of biological role, DNA-dependent RNA polymerase (RNAP) catalyzes the transcription of DNA into RNA using the four ribonucleoside triphosphates as substrates. This is DNA-directed RNA polymerase subunit Rpo11 from Sulfolobus acidocaldarius (strain ATCC 33909 / DSM 639 / JCM 8929 / NBRC 15157 / NCIMB 11770).